Consider the following 129-residue polypeptide: uncharacterized protein (129 aa).

Helical transmembrane passes span 15–35, 48–68, and 107–127; these read IFII…IFVF, IFSF…YYFF, and INIF…NLVC.

The protein localises to the membrane. This is an uncharacterized protein from Saccharomyces cerevisiae (strain ATCC 204508 / S288c) (Baker's yeast).